The sequence spans 364 residues: MCNVSQDSCNIDSRLDSLFPPTLYIFVMVIGFPTNCLSLWAAFVQVRQKNELGVYLLNLSISDLLYIATLPPWVNYFLHQDNWIHGPESCKLFGFILYTNIYISIGFLSCISVDRYLAVAHPLKFAKVRRVKTAAVVSAVVWAIEIGANSAPLFHNELFEDRFNHTFCFEKYPMEDWVAQMNLYRVFVGFLFPWVLMLFCYQGILRAVKTNVSTEREEKAKIKRLALSLIAILLFCFAPYHLILLSRSVVYLGQPCDCTFEENIFTAYHVSLALTSLNCVADPILYCLANEGARSEVTRGLAPLMKFFSASRPNMDSFARSVTLDTPWSSRRAAAPSPRSWSLCGQTGGRGRRSRVRRRRDCKC.

At 1–8 (MCNVSQDS) the chain is on the extracellular side. N-linked (GlcNAc...) asparagine glycosylation is present at asparagine 3. A helical membrane pass occupies residues 9–45 (CNIDSRLDSLFPPTLYIFVMVIGFPTNCLSLWAAFVQ). Disulfide bonds link cysteine 9–cysteine 258 and cysteine 90–cysteine 168. The Cytoplasmic portion of the chain corresponds to 46–49 (VRQK). A helical membrane pass occupies residues 50-80 (NELGVYLLNLSISDLLYIATLPPWVNYFLHQ). Over 81-85 (DNWIH) the chain is Extracellular. Residues 86-121 (GPESCKLFGFILYTNIYISIGFLSCISVDRYLAVAH) form a helical membrane-spanning segment. Topologically, residues 122-129 (PLKFAKVR) are cytoplasmic. Residues 130-156 (RVKTAAVVSAVVWAIEIGANSAPLFHN) form a helical membrane-spanning segment. Topologically, residues 157-172 (ELFEDRFNHTFCFEKY) are extracellular. The extracellular loop 2 (ECL2) stretch occupies residues 157–172 (ELFEDRFNHTFCFEKY). An N-linked (GlcNAc...) asparagine glycan is attached at asparagine 164. Residues 173-210 (PMEDWVAQMNLYRVFVGFLFPWVLMLFCYQGILRAVKT) traverse the membrane as a helical segment. The Cytoplasmic segment spans residues 211–214 (NVST). The helical transmembrane segment at 215 to 250 (EREEKAKIKRLALSLIAILLFCFAPYHLILLSRSVV) threads the bilayer. Residues 251–260 (YLGQPCDCTF) lie on the Extracellular side of the membrane. The helical transmembrane segment at 261–289 (EENIFTAYHVSLALTSLNCVADPILYCLA) threads the bilayer. Over 290-364 (NEGARSEVTR…RVRRRRDCKC (75 aa)) the chain is Cytoplasmic.

Belongs to the G-protein coupled receptor 1 family.

The protein localises to the cell membrane. Its activity is regulated as follows. Activated by a network of residues that connects an extracellular-facing cavity to Glu-145, a conserved charged residue buried in the transmembrane core of the receptor. Protonation likely drives conformational changes in extracellular loop 2 (ECL2), which stabilizes movement of transmembrane 3 (TM3) and a series of rearrangements that connect the extracellular-facing cavity to Glu-145, a residue only conserved in proton-sensing G-protein coupled receptors. In terms of biological role, proton-sensing G-protein coupled receptor activated by extracellular pH, which is required to monitor pH changes and generate adaptive reactions. Ligand binding causes a conformation change that triggers signaling via guanine nucleotide-binding proteins (G proteins) and modulates the activity of downstream effectors, such as adenylate cyclase. The polypeptide is G-protein coupled receptor 4 (Callorhinchus milii (Ghost shark)).